A 190-amino-acid polypeptide reads, in one-letter code: Imidazoleglycerol-phosphate dehydratase (190 aa).

Belongs to the imidazoleglycerol-phosphate dehydratase family.

It localises to the cytoplasm. It carries out the reaction D-erythro-1-(imidazol-4-yl)glycerol 3-phosphate = 3-(imidazol-4-yl)-2-oxopropyl phosphate + H2O. It participates in amino-acid biosynthesis; L-histidine biosynthesis; L-histidine from 5-phospho-alpha-D-ribose 1-diphosphate: step 6/9. This chain is Imidazoleglycerol-phosphate dehydratase, found in Aliarcobacter butzleri (strain RM4018) (Arcobacter butzleri).